A 60-amino-acid polypeptide reads, in one-letter code: Large ribosomal subunit protein bL32 (60 aa).

Belongs to the bacterial ribosomal protein bL32 family.

This is Large ribosomal subunit protein bL32 from Clostridium novyi (strain NT).